A 208-amino-acid chain; its full sequence is Small ribosomal subunit protein uS4 (208 aa).

In terms of domain architecture, S4 RNA-binding spans R98 to Q161.

It belongs to the universal ribosomal protein uS4 family. Part of the 30S ribosomal subunit. Contacts protein S5. The interaction surface between S4 and S5 is involved in control of translational fidelity.

Its function is as follows. One of the primary rRNA binding proteins, it binds directly to 16S rRNA where it nucleates assembly of the body of the 30S subunit. Functionally, with S5 and S12 plays an important role in translational accuracy. The protein is Small ribosomal subunit protein uS4 of Oleidesulfovibrio alaskensis (strain ATCC BAA-1058 / DSM 17464 / G20) (Desulfovibrio alaskensis).